The sequence spans 169 residues: Ribosomal RNA large subunit methyltransferase H (169 aa).

S-adenosyl-L-methionine is bound by residues Leu85, Gly117, and 136–141; that span reads LGELTW.

The protein belongs to the RNA methyltransferase RlmH family. Homodimer.

The protein resides in the cytoplasm. It catalyses the reaction pseudouridine(1915) in 23S rRNA + S-adenosyl-L-methionine = N(3)-methylpseudouridine(1915) in 23S rRNA + S-adenosyl-L-homocysteine + H(+). Functionally, specifically methylates the pseudouridine at position 1915 (m3Psi1915) in 23S rRNA. In Brucella abortus biovar 1 (strain 9-941), this protein is Ribosomal RNA large subunit methyltransferase H.